Consider the following 159-residue polypeptide: Transcriptional repressor NrdR (159 aa).

A zinc finger lies at 3 to 34; sequence CPKCGYNKSSVVDSRQAEEGTTIRRRRECEKC. Residues 49-139 enclose the ATP-cone domain; sequence LLVIKKDGTR…VYKSFKDVDE (91 aa).

The protein belongs to the NrdR family. The cofactor is Zn(2+).

Functionally, negatively regulates transcription of bacterial ribonucleotide reductase nrd genes and operons by binding to NrdR-boxes. The chain is Transcriptional repressor NrdR from Streptococcus agalactiae serotype Ia (strain ATCC 27591 / A909 / CDC SS700).